The sequence spans 77 residues: Conotoxin King-Kong 2 (77 aa).

The N-terminal stretch at 1-22 is a signal peptide; sequence MKLTCMMIVAVLFLTAWTFVTA. The propeptide occupies 23–49; sequence DDSGNGLENLFSKAHHEMKNPEASNLN. Intrachain disulfides connect cysteine 52–cysteine 67, cysteine 59–cysteine 71, and cysteine 66–cysteine 76. At cysteine 76 the chain carries Cysteine amide.

This sequence belongs to the conotoxin O1 superfamily. As to expression, expressed by the venom duct.

It is found in the secreted. The polypeptide is Conotoxin King-Kong 2 (Conus textile (Cloth-of-gold cone)).